Consider the following 339-residue polypeptide: DNA-directed RNA polymerase subunit alpha (339 aa).

Residues 1-233 form an alpha N-terminal domain (alpha-NTD) region; sequence MVREEVAGST…DLFLPFLHAE (233 aa). An alpha C-terminal domain (alpha-CTD) region spans residues 264-339; the sequence is KKGIPLNCIF…IDLLKNKLSF (76 aa).

It belongs to the RNA polymerase alpha chain family. In terms of assembly, in plastids the minimal PEP RNA polymerase catalytic core is composed of four subunits: alpha, beta, beta', and beta''. When a (nuclear-encoded) sigma factor is associated with the core the holoenzyme is formed, which can initiate transcription.

It localises to the plastid. The protein resides in the chloroplast. The enzyme catalyses RNA(n) + a ribonucleoside 5'-triphosphate = RNA(n+1) + diphosphate. In terms of biological role, DNA-dependent RNA polymerase catalyzes the transcription of DNA into RNA using the four ribonucleoside triphosphates as substrates. The sequence is that of DNA-directed RNA polymerase subunit alpha from Psathyrostachys stoloniformis.